The primary structure comprises 112 residues: Cell cycle protein GpsB (112 aa).

A coiled-coil region spans residues 42–77 (YQKMADMNNEVVKLSEENHKLKKELEELRLRVATSR). The tract at residues 74 to 96 (ATSRPQDNKNFSSNNSSSASNNV) is disordered. Positions 81–95 (NKNFSSNNSSSASNN) are enriched in low complexity.

It belongs to the GpsB family. In terms of assembly, forms polymers through the coiled coil domains. Interacts with PBP1, MreC and EzrA.

Its subcellular location is the cytoplasm. In terms of biological role, divisome component that associates with the complex late in its assembly, after the Z-ring is formed, and is dependent on DivIC and PBP2B for its recruitment to the divisome. Together with EzrA, is a key component of the system that regulates PBP1 localization during cell cycle progression. Its main role could be the removal of PBP1 from the cell pole after pole maturation is completed. Also contributes to the recruitment of PBP1 to the division complex. Not essential for septum formation. The chain is Cell cycle protein GpsB from Staphylococcus epidermidis (strain ATCC 12228 / FDA PCI 1200).